A 352-amino-acid polypeptide reads, in one-letter code: Uroporphyrinogen decarboxylase (352 aa).

Substrate-binding positions include 26–30 (RQAGR), F45, D76, Y153, S208, and H323.

This sequence belongs to the uroporphyrinogen decarboxylase family. As to quaternary structure, homodimer.

The protein localises to the cytoplasm. The catalysed reaction is uroporphyrinogen III + 4 H(+) = coproporphyrinogen III + 4 CO2. The protein operates within porphyrin-containing compound metabolism; protoporphyrin-IX biosynthesis; coproporphyrinogen-III from 5-aminolevulinate: step 4/4. Its function is as follows. Catalyzes the decarboxylation of four acetate groups of uroporphyrinogen-III to yield coproporphyrinogen-III. The protein is Uroporphyrinogen decarboxylase of Prochlorococcus marinus (strain MIT 9313).